The primary structure comprises 186 residues: ATP synthase subunit delta (186 aa).

The protein belongs to the ATPase delta chain family. As to quaternary structure, F-type ATPases have 2 components, F(1) - the catalytic core - and F(0) - the membrane proton channel. F(1) has five subunits: alpha(3), beta(3), gamma(1), delta(1), epsilon(1). F(0) has three main subunits: a(1), b(2) and c(10-14). The alpha and beta chains form an alternating ring which encloses part of the gamma chain. F(1) is attached to F(0) by a central stalk formed by the gamma and epsilon chains, while a peripheral stalk is formed by the delta and b chains.

Its subcellular location is the cell inner membrane. Functionally, f(1)F(0) ATP synthase produces ATP from ADP in the presence of a proton or sodium gradient. F-type ATPases consist of two structural domains, F(1) containing the extramembraneous catalytic core and F(0) containing the membrane proton channel, linked together by a central stalk and a peripheral stalk. During catalysis, ATP synthesis in the catalytic domain of F(1) is coupled via a rotary mechanism of the central stalk subunits to proton translocation. In terms of biological role, this protein is part of the stalk that links CF(0) to CF(1). It either transmits conformational changes from CF(0) to CF(1) or is implicated in proton conduction. The polypeptide is ATP synthase subunit delta (Azorhizobium caulinodans (strain ATCC 43989 / DSM 5975 / JCM 20966 / LMG 6465 / NBRC 14845 / NCIMB 13405 / ORS 571)).